Here is a 109-residue protein sequence, read N- to C-terminus: Ferredoxin (109 aa).

4Fe-4S ferredoxin-type domains lie at 2–30 and 31–60; these read TYVVNDECVKCKYTDCVDVCPVDCFYEGE and FMLVINPDECIDCGVCVPDCPIDAIKPESP. Residues C9 and C17 each contribute to the [3Fe-4S] cluster site. [4Fe-4S] cluster-binding residues include C21, C40, C43, and C46. C50 contacts [3Fe-4S] cluster.

[4Fe-4S] cluster serves as cofactor. [3Fe-4S] cluster is required as a cofactor.

Ferredoxins are iron-sulfur proteins that transfer electrons in a wide variety of metabolic reactions. This chain is Ferredoxin (fdxA), found in Rickettsia felis (strain ATCC VR-1525 / URRWXCal2) (Rickettsia azadi).